The sequence spans 139 residues: Cytochrome c-551 (139 aa).

The N-terminal stretch at 1 to 20 (MTRTLAVVLAMTFSAAPVFA) is a signal peptide. Heme c-binding residues include cysteine 34, cysteine 37, histidine 38, and methionine 116.

It belongs to the cytochrome c family. Binds 1 heme c group covalently per subunit.

The sequence is that of Cytochrome c-551 from Roseobacter denitrificans (strain ATCC 33942 / OCh 114) (Erythrobacter sp. (strain OCh 114)).